A 61-amino-acid chain; its full sequence is Small ribosomal subunit protein uS14 (61 aa).

Positions 24, 27, 40, and 43 each coordinate Zn(2+).

The protein belongs to the universal ribosomal protein uS14 family. Zinc-binding uS14 subfamily. As to quaternary structure, part of the 30S ribosomal subunit. Contacts proteins S3 and S10. Requires Zn(2+) as cofactor.

In terms of biological role, binds 16S rRNA, required for the assembly of 30S particles and may also be responsible for determining the conformation of the 16S rRNA at the A site. The sequence is that of Small ribosomal subunit protein uS14 from Anaeromyxobacter sp. (strain Fw109-5).